A 367-amino-acid chain; its full sequence is Trans-enoyl reductase ffsC (367 aa).

An NADP(+)-binding site is contributed by 55 to 58; the sequence is CDWK. 143-150 contacts substrate; that stretch reads TGIGTLGL. NADP(+) contacts are provided by residues 203 to 206, Y221, and 268 to 269; these read SAKN and LE. 288-292 is a substrate binding site; sequence GMAIL. 357–358 serves as a coordination point for NADP(+); it reads VS.

It belongs to the zinc-containing alcohol dehydrogenase family. In terms of assembly, monomer.

It functions in the pathway mycotoxin biosynthesis. In terms of biological role, trans-enoyl reductase; part of the gene cluster that mediates the biosynthesis of the cytotoxic leucine-containing cytochalasans, including aspochalasin C, aspochalasin E, TMC-169, flavichalasine F, aspergillin PZ, aspochalasin M and flavichalasine G. The first step in the pathway is catalyzed by the hybrid PKS-NRPS ffsA that utilizes 8 units of malonyl-CoA to iteratively assemble the octaketide chain before addition of L-leucine by the C-terminal NRPS modules. Because ffsA lacks a designated enoylreductase (ER) domain, the required activity is provided the enoyl reductase fssC. The methyltransferase (MT) domain of ffsA catalyzes the alpha-methylation at C10 and C14 using S-adenosyl-L-methionine as the methyl-donating cosubstrate. Reduction by the hydrolyase ffsE, followed by dehydration and intra-molecular Diels-Alder cyclization by the Diels-Alderase ffsF then yield the required isoindolone-fused macrocycle. A number of oxidative steps catalyzed by the tailoring cytochrome P450 monooxygenase ffsD, the FAD-linked oxidoreductase ffsJ and the short-chain dehydrogenase/reductase ffsI, are further required to afford the final products. The protein is Trans-enoyl reductase ffsC of Aspergillus flavipes.